Consider the following 627-residue polypeptide: Carene synthase 2, chloroplastic (627 aa).

The N-terminal 36 residues, 1–36 (MSVISIVPLASKSCLYKSLMSSTHELKALCRPIVTL), are a transit peptide targeting the chloroplast. Mg(2+)-binding residues include D378, D382, and D530. Positions 378–382 (DDMYD) match the DDXXD motif motif.

The protein belongs to the terpene synthase family. Tpsd subfamily. Mg(2+) is required as a cofactor. Mn(2+) serves as cofactor.

Its subcellular location is the plastid. It localises to the chloroplast. It catalyses the reaction (2E)-geranyl diphosphate = (+)-car-3-ene + diphosphate. It participates in terpene metabolism; oleoresin biosynthesis. Its function is as follows. Terpene synthase (TPS) involved in defensive oleoresin formation in conifers in response to insect attack (e.g. white pine weevil P.strobi) or other injury. The polypeptide is Carene synthase 2, chloroplastic (TPS-3car2) (Picea sitchensis (Sitka spruce)).